Consider the following 114-residue polypeptide: Large ribosomal subunit protein uL22 (114 aa).

The protein belongs to the universal ribosomal protein uL22 family. In terms of assembly, part of the 50S ribosomal subunit.

This protein binds specifically to 23S rRNA; its binding is stimulated by other ribosomal proteins, e.g. L4, L17, and L20. It is important during the early stages of 50S assembly. It makes multiple contacts with different domains of the 23S rRNA in the assembled 50S subunit and ribosome. Functionally, the globular domain of the protein is located near the polypeptide exit tunnel on the outside of the subunit, while an extended beta-hairpin is found that lines the wall of the exit tunnel in the center of the 70S ribosome. The protein is Large ribosomal subunit protein uL22 of Streptococcus agalactiae serotype Ia (strain ATCC 27591 / A909 / CDC SS700).